A 165-amino-acid polypeptide reads, in one-letter code: Deoxyuridine 5'-triphosphate nucleotidohydrolase (165 aa).

Substrate is bound by residues 66–68, Asn-79, 83–85, and Lys-93; these read RSG and TVD. The tract at residues 134-165 is disordered; that stretch reads ETSRGAGGHGSSGGHASLTPGARSAARVAQEG.

The protein belongs to the dUTPase family. The cofactor is Mg(2+).

It catalyses the reaction dUTP + H2O = dUMP + diphosphate + H(+). It participates in pyrimidine metabolism; dUMP biosynthesis; dUMP from dCTP (dUTP route): step 2/2. In terms of biological role, this enzyme is involved in nucleotide metabolism: it produces dUMP, the immediate precursor of thymidine nucleotides and it decreases the intracellular concentration of dUTP so that uracil cannot be incorporated into DNA. In Nocardia farcinica (strain IFM 10152), this protein is Deoxyuridine 5'-triphosphate nucleotidohydrolase.